We begin with the raw amino-acid sequence, 221 residues long: Vesicle-associated membrane protein 714 (221 aa).

An N-acetylalanine modification is found at A2. The Cytoplasmic segment spans residues 2–190 (AIVYAVVARG…RRALWMKNAK (189 aa)). The Longin domain maps to 7 to 112 (VVARGTVVLA…AMNDEFSRVL (106 aa)). Positions 127–187 (TLNRVRGEVS…KRLRRALWMK (61 aa)) constitute a v-SNARE coiled-coil homology domain. Residues 191 to 211 (LLVLLTCLIVFLLYIIIASFC) traverse the membrane as a helical; Anchor for type IV membrane protein segment. At 212 to 221 (GGITLPSCRS) the chain is on the vesicular side.

The protein belongs to the synaptobrevin family. Highly expressed in leaves, stems and roots. Detected in flowers.

It is found in the golgi apparatus membrane. In terms of biological role, involved in the targeting and/or fusion of transport vesicles to their target membrane. This is Vesicle-associated membrane protein 714 from Arabidopsis thaliana (Mouse-ear cress).